The primary structure comprises 244 residues: Ribosome-inactivating protein cucurmosin (244 aa).

Active-site residues include tyrosine 70, tyrosine 109, glutamate 158, and arginine 161. Asparagine 189 and asparagine 225 each carry an N-linked (GlcNAc...) asparagine glycan.

Belongs to the ribosome-inactivating protein family. Type 1 RIP subfamily. Post-translationally, the N-linked glycan consists of GlcNAc2Man3Xyl.

It catalyses the reaction Endohydrolysis of the N-glycosidic bond at one specific adenosine on the 28S rRNA.. Functionally, has cytotoxic activity towards cancer cells, but not normal cells. Inhibits the growth of the human leukemia cell line K562, the murine melanoma cell line B16 and the lung adenocarcinoma cell line A549 with IC(50) values of 88.1 nM, 63.4 nM and 359.3 nM respectively. In Cucurbita moschata (Winter crookneck squash), this protein is Ribosome-inactivating protein cucurmosin.